The primary structure comprises 122 residues: MICOS complex subunit MIC13 homolog QIL1 (122 aa).

A helical transmembrane segment spans residues 9–25 (GGLVAATVYYTQKVGIW).

This sequence belongs to the MICOS complex subunit Mic13 family. In terms of assembly, component of the mitochondrial contact site and cristae organizing system (MICOS) complex.

Its subcellular location is the mitochondrion inner membrane. Its function is as follows. Component of the MICOS complex, a large protein complex of the mitochondrial inner membrane that plays crucial roles in the maintenance of crista junctions, inner membrane architecture, and formation of contact sites to the outer membrane. This Drosophila melanogaster (Fruit fly) protein is MICOS complex subunit MIC13 homolog QIL1.